The primary structure comprises 91 residues: Large ribosomal subunit protein eL43 (91 aa).

A C4-type zinc finger spans residues 39–60; sequence CSFCGKDAVRRSSVGIWKCNGC.

The protein belongs to the eukaryotic ribosomal protein eL43 family.

The sequence is that of Large ribosomal subunit protein eL43 (rpl37A) from Dictyostelium discoideum (Social amoeba).